We begin with the raw amino-acid sequence, 325 residues long: Intelectin (325 aa).

The N-terminal stretch at 1–23 (MKYCVLLIMIHLLLVELPQFPEA) is a signal peptide. Residues 44–266 (IRSSYIGRSC…AAMAICSGVK (223 aa)) enclose the Fibrinogen C-terminal domain. A disulfide bond links Cys-53 and Cys-82. His-98, Glu-99, Asn-101, Gly-104, Gly-109, Asp-110, Asp-145, Glu-274, Glu-286, and Asp-294 together coordinate Ca(2+). 2 disulfides stabilise this stretch: Cys-106/Cys-292 and Cys-262/Cys-277. A carbohydrate is bound by residues 274–275 (EH) and Glu-286.

In terms of tissue distribution, expressed at high levels in caudal kidney, liver, and swim bladder. Also expressed in gill, spleen, intestine and head kidney. Not detected in heart.

Functionally, may be involved in innate immune surveillance. May specifically recognize carbohydrate chains of pathogens and bacterial components in a calcium-dependent manner. In vitro binds N-acetylglucosamine residues. The chain is Intelectin from Oncorhynchus mykiss (Rainbow trout).